The sequence spans 122 residues: Large ribosomal subunit protein uL14 (122 aa).

It belongs to the universal ribosomal protein uL14 family. Part of the 50S ribosomal subunit. Forms a cluster with proteins L3 and L19. In the 70S ribosome, L14 and L19 interact and together make contacts with the 16S rRNA in bridges B5 and B8.

Binds to 23S rRNA. Forms part of two intersubunit bridges in the 70S ribosome. This Bacillus cytotoxicus (strain DSM 22905 / CIP 110041 / 391-98 / NVH 391-98) protein is Large ribosomal subunit protein uL14.